Consider the following 310-residue polypeptide: uncharacterized protein (310 aa).

The region spanning 5 to 62 is the HTH lysR-type domain; the sequence is FTEENLLAFTTAARFGSFSKAAEELGLTTSAISYTIKRMETGLDVVLFTRSTRSIELT. Residues 22–42 constitute a DNA-binding region (H-T-H motif); sequence FSKAAEELGLTTSAISYTIKR.

The protein belongs to the LysR transcriptional regulatory family.

This is an uncharacterized protein from Escherichia coli (strain K12).